An 889-amino-acid polypeptide reads, in one-letter code: Disease resistance protein RPS5 (889 aa).

Gly-2 carries N-myristoyl glycine lipidation. A lipid anchor (S-palmitoyl cysteine) is attached at Cys-4. A coiled-coil region spans residues 29–58; the sequence is IHNLSKNLASLQKAMRMLKARQYDVIRRLE. Residues 140 to 444 form the NB-ARC domain; it reads SEATPFADVD…SEGFINEKEG (305 aa). 183–190 is a binding site for ATP; sequence GMGGVGKT. 6 LRR repeats span residues 518 to 539, 540 to 561, 564 to 586, 588 to 610, 611 to 633, and 634 to 656; these read TVRKISLMNNEIEEIFDSHECA, ALTTLFLQKNDVVKISAEFFRC, HLVVLDLSENQSLNELPEEISEL, SLRYFNLSYTCIHQLPVGLWTLK, KLIHLNLEHMSSLGSILGISNLW, and NLRTLGLRDSRLLLDMSLVKELQ.

The protein belongs to the disease resistance NB-LRR family. As to quaternary structure, in uninfected plants, interacts with PBS1 through the coiled coil domain. Homodimer.

Its subcellular location is the cell membrane. Disease resistance (R) protein that specifically recognizes the avrPphB type III effector avirulence protein from Pseudomonas syringae. Also confers resistance against Hyaloperonospora parasitica (downy mildew). Resistance proteins guard the plant against pathogens that contain an appropriate avirulence protein via an indirect interaction with this avirulence protein. That triggers a defense system including the hypersensitive response, which restricts the pathogen growth. Requires PBS1 to trigger the defense reaction against avrPphB. In case of infection by Pseudomonas syringae, AvrPphB triggers RPS5-mediated defense mechanism via the cleavage of PBS1, suggesting that the cleavage of PBS1 could trigger an exchange of ADP for ATP, thereby activating RPS5. May function as a fine-tuned sensor of alterations in the structure of the effector target PBS1. This is Disease resistance protein RPS5 (RPS5) from Arabidopsis thaliana (Mouse-ear cress).